The chain runs to 230 residues: 6-carboxyhexanoate--CoA ligase (230 aa).

This sequence belongs to the BioW family. In terms of assembly, homodimer. The cofactor is Mg(2+).

The catalysed reaction is heptanedioate + ATP + CoA = 6-carboxyhexanoyl-CoA + AMP + diphosphate. Its pathway is metabolic intermediate metabolism; pimeloyl-CoA biosynthesis; pimeloyl-CoA from pimelate: step 1/1. In terms of biological role, catalyzes the transformation of pimelate into pimeloyl-CoA with concomitant hydrolysis of ATP to AMP. This chain is 6-carboxyhexanoate--CoA ligase, found in Staphylococcus aureus (strain Mu3 / ATCC 700698).